The following is a 165-amino-acid chain: Coatomer subunit zeta (165 aa).

The protein belongs to the adaptor complexes small subunit family. Oligomeric complex that consists of at least the alpha, beta, beta', gamma, delta, epsilon and zeta subunits.

It localises to the cytoplasm. Its subcellular location is the golgi apparatus membrane. The protein localises to the cytoplasmic vesicle. The protein resides in the COPI-coated vesicle membrane. Functionally, the coatomer is a cytosolic protein complex that binds to dilysine motifs and reversibly associates with Golgi non-clathrin-coated vesicles, which further mediate biosynthetic protein transport from the ER, via the Golgi up to the trans Golgi network. Coatomer complex is required for budding from Golgi membranes, and is essential for the retrograde Golgi-to-ER transport of dilysine-tagged proteins. The zeta subunit may be involved in regulating the coat assembly and, hence, the rate of biosynthetic protein transport due to its association-dissociation properties with the coatomer complex. In Encephalitozoon cuniculi (strain GB-M1) (Microsporidian parasite), this protein is Coatomer subunit zeta.